The chain runs to 206 residues: Small ribosomal subunit protein uS4c (206 aa).

Composition is skewed to basic residues over residues 1 to 13 and 25 to 34; these read MSRYRGPKLRITR and QSKKKGRPGQ. Positions 1–50 are disordered; the sequence is MSRYRGPKLRITRRLGALPGLTQKQSKKKGRPGQHGKSNEADNSKKTTEY. Residues 37 to 50 are compositionally biased toward basic and acidic residues; the sequence is KSNEADNSKKTTEY. An S4 RNA-binding domain is found at 95-157; the sequence is MRLDTICFTL…ATSKNLVEGN (63 aa).

This sequence belongs to the universal ribosomal protein uS4 family. Part of the 30S ribosomal subunit. Contacts protein S5. The interaction surface between S4 and S5 is involved in control of translational fidelity.

The protein resides in the plastid. It localises to the chloroplast. In terms of biological role, one of the primary rRNA binding proteins, it binds directly to 16S rRNA where it nucleates assembly of the body of the 30S subunit. Functionally, with S5 and S12 plays an important role in translational accuracy. In Trieres chinensis (Marine centric diatom), this protein is Small ribosomal subunit protein uS4c (rps4).